Consider the following 397-residue polypeptide: Acetate kinase (397 aa).

Asn7 is a binding site for Mg(2+). Residue Lys14 coordinates ATP. Arg90 serves as a coordination point for substrate. Residue Asp147 is the Proton donor/acceptor of the active site. ATP-binding positions include His207 to Gly211, Asp282 to Arg284, and Gly330 to Asn334. Glu383 lines the Mg(2+) pocket.

The protein belongs to the acetokinase family. Homodimer. Mg(2+) serves as cofactor. Requires Mn(2+) as cofactor.

It is found in the cytoplasm. It catalyses the reaction acetate + ATP = acetyl phosphate + ADP. Its pathway is metabolic intermediate biosynthesis; acetyl-CoA biosynthesis; acetyl-CoA from acetate: step 1/2. Catalyzes the formation of acetyl phosphate from acetate and ATP. Can also catalyze the reverse reaction. This chain is Acetate kinase, found in Clostridium botulinum (strain 657 / Type Ba4).